The sequence spans 205 residues: Ferritin heavy chain (205 aa).

The first 19 residues, 1–19 (MVKLIASLLLLAVVAQAYG), serve as a signal peptide directing secretion. The Ferritin-like diiron domain occupies 35 to 190 (VDMKDACIKG…GKLTTLKKMM (156 aa)). Cys41 and Cys150 form a disulfide bridge. Residues Glu52, Glu87, His90, Glu136, and Gln172 each coordinate Fe cation.

It belongs to the ferritin family. As to quaternary structure, oligomer of 12 light (L) chains and 12 heavy (H) chains; L and H chains are disulfide-linked. The functional molecule forms a roughly spherical shell with a diameter of 12 nm and contains a central cavity into which the insoluble ferric iron core is deposited. As to expression, expressed in hemolymph and gut (at protein level). Expressed in the head (at protein level). Expressed in thorax and abdomen.

The protein localises to the golgi apparatus. It is found in the secreted. It carries out the reaction 4 Fe(2+) + O2 + 4 H(+) = 4 Fe(3+) + 2 H2O. Functionally, stores iron in a soluble, non-toxic, readily available form. Important for iron homeostasis. Iron is taken up in the ferrous form and deposited as ferric hydroxides after oxidation. Ferritin is composed of a heavy (H) chain which is responsible for the oxidation and uptake of ferrous iron, and a light (L) chain which facilitates the nucleation of the ferrihydrite iron core. Required for dietary iron absorption in the midgut. Involved in tissue iron detoxification by exporting excess iron. Functions as an antioxidant and protects the developing organs from cell-mediated ferroptosis. Required for embryo and larval development. Plays a role in blood cell (haemocyte) differentiation in the lymph gland at the larval stage. May also store Zn(2+) and Mn(2+) and thus may play a role in zinc and manganese homeostasis. This Drosophila melanogaster (Fruit fly) protein is Ferritin heavy chain.